A 213-amino-acid chain; its full sequence is Glycerol-3-phosphate acyltransferase (213 aa).

6 helical membrane passes run 3–23 (IIILLLIASYLLGAIPFGLWI), 48–68 (ILGVKAGIAVFIFDLLKGTLA), 71–91 (LPLIFHINGVSPLIFGLLAVI), 119–139 (PFFLLYLLVIFILVLWLFSMI), 144–164 (VVAAIFALLGILIFPSFGFIL), and 165–185 (TSYDLLFSIIIFALAIIIIFR).

It belongs to the PlsY family. Probably interacts with PlsX.

The protein localises to the cell membrane. The catalysed reaction is an acyl phosphate + sn-glycerol 3-phosphate = a 1-acyl-sn-glycero-3-phosphate + phosphate. The protein operates within lipid metabolism; phospholipid metabolism. Functionally, catalyzes the transfer of an acyl group from acyl-phosphate (acyl-PO(4)) to glycerol-3-phosphate (G3P) to form lysophosphatidic acid (LPA). This enzyme utilizes acyl-phosphate as fatty acyl donor, but not acyl-CoA or acyl-ACP. The protein is Glycerol-3-phosphate acyltransferase of Lactococcus lactis subsp. cremoris (strain SK11).